Reading from the N-terminus, the 326-residue chain is 5,10-methylenetetrahydromethanopterin reductase (326 aa).

Belongs to the mer family.

Its subcellular location is the cytoplasm. It carries out the reaction 5-methyl-5,6,7,8-tetrahydromethanopterin + oxidized coenzyme F420-(gamma-L-Glu)(n) + H(+) = 5,10-methylenetetrahydromethanopterin + reduced coenzyme F420-(gamma-L-Glu)(n). It functions in the pathway one-carbon metabolism; methanogenesis from CO(2); methyl-coenzyme M from 5,10-methylene-5,6,7,8-tetrahydromethanopterin: step 1/2. Functionally, catalyzes the reversible reduction of methylene-H(4)MPT to methyl-H(4)MPT. This is 5,10-methylenetetrahydromethanopterin reductase from Methanolobus tindarius.